The following is a 195-amino-acid chain: Inner membrane-spanning protein YciB (195 aa).

A run of 5 helical transmembrane segments spans residues 34–54, 65–85, 88–108, 131–151, and 160–180; these read IYGA…ALWL, FTLG…EDTF, WKAP…HFIG, LNIA…YVVF, and FKVF…GLFL.

It belongs to the YciB family.

It localises to the cell inner membrane. Its function is as follows. Plays a role in cell envelope biogenesis, maintenance of cell envelope integrity and membrane homeostasis. This is Inner membrane-spanning protein YciB from Pseudomonas aeruginosa (strain LESB58).